The chain runs to 256 residues: Ribosomal RNA small subunit methyltransferase J (256 aa).

Residues arginine 101 to aspartate 102, glutamate 117 to arginine 118, and aspartate 174 each bind S-adenosyl-L-methionine.

Belongs to the methyltransferase superfamily. RsmJ family.

Its subcellular location is the cytoplasm. It catalyses the reaction guanosine(1516) in 16S rRNA + S-adenosyl-L-methionine = N(2)-methylguanosine(1516) in 16S rRNA + S-adenosyl-L-homocysteine + H(+). Specifically methylates the guanosine in position 1516 of 16S rRNA. This is Ribosomal RNA small subunit methyltransferase J from Chromohalobacter salexigens (strain ATCC BAA-138 / DSM 3043 / CIP 106854 / NCIMB 13768 / 1H11).